The sequence spans 502 residues: ATP synthase subunit alpha (502 aa).

Residue 169 to 176 participates in ATP binding; it reads GDRQVGKT.

This sequence belongs to the ATPase alpha/beta chains family. F-type ATPases have 2 components, CF(1) - the catalytic core - and CF(0) - the membrane proton channel. CF(1) has five subunits: alpha(3), beta(3), gamma(1), delta(1), epsilon(1). CF(0) has three main subunits: a(1), b(2) and c(9-12). The alpha and beta chains form an alternating ring which encloses part of the gamma chain. CF(1) is attached to CF(0) by a central stalk formed by the gamma and epsilon chains, while a peripheral stalk is formed by the delta and b chains.

The protein localises to the cell membrane. The enzyme catalyses ATP + H2O + 4 H(+)(in) = ADP + phosphate + 5 H(+)(out). In terms of biological role, produces ATP from ADP in the presence of a proton gradient across the membrane. The alpha chain is a regulatory subunit. This is ATP synthase subunit alpha from Lysinibacillus sphaericus (strain C3-41).